The primary structure comprises 942 residues: ATP-dependent RNA helicase DDX42 (942 aa).

Positions 1-18 (MNWNKGGPGTKRGFGFGG) are enriched in gly residues. The tract at residues 1–114 (MNWNKGGPGT…KPIDSDSDDD (114 aa)) is disordered. Position 5 is an N6-acetyllysine (Lys5). Omega-N-methylarginine is present on Arg12. The segment covering 35–52 (SHSAFGATSSSSGFGKSA) has biased composition (low complexity). Ser58 carries the phosphoserine modification. Residues 70–84 (DEENAYFEDEEEDSS) show a composition bias toward acidic residues. Residues Ser96, Ser104, Ser109, and Ser111 each carry the phosphoserine modification. Residues 116 to 157 (LEAFMAEVEDQAARDMKRLEEKDKERKNVKGIRDDIEEEDDQ) adopt a coiled-coil conformation. The interval 182-203 (EYDSDGNPIAPTKKIIDPLPPI) is disordered. Position 185 is a phosphoserine (Ser185). The Q motif signature appears at 253–281 (SSFAHFGFDEQLMHQIRKSEYTQPTPIQC). The 176-residue stretch at 284–459 (VPVALSGRDM…RDILIDPIRV (176 aa)) folds into the Helicase ATP-binding domain. 297–304 (AKTGSGKT) provides a ligand contact to ATP. A DEAD box motif is present at residues 407-410 (DEAD). The Helicase C-terminal domain occupies 487-632 (WLTRRLVEFT…HVSKELLDLA (146 aa)). 2 stretches are compositionally biased toward polar residues: residues 737–760 (LNSV…TSAT) and 786–798 (GVNN…NSRE). Disordered regions lie at residues 737–762 (LNSV…ATKG) and 783–942 (GAQG…RWDS). The tract at residues 738 to 833 (NSVPTNSAQQ…TGNRHSDSPR (96 aa)) is necessary for interaction with TP53BP2. Ser754 carries the phosphoserine modification. Residues 820–924 (SHGETGNRHS…KVDSKTDKTA (105 aa)) are compositionally biased toward basic and acidic residues. Lys899 participates in a covalent cross-link: Glycyl lysine isopeptide (Lys-Gly) (interchain with G-Cter in SUMO2).

The protein belongs to the DEAD box helicase family. DDX42 subfamily. As to quaternary structure, transient component of the SF3B subcomplex of the 17S U2 SnRNP complex. Interacts (via the C-terminus) with TP53BP2; the interaction is not inhibitied by TP53BP2 ubiquitination and is independent of p53/TP53.

The protein localises to the cytoplasm. The protein resides in the nucleus. The catalysed reaction is ATP + H2O = ADP + phosphate + H(+). In terms of biological role, ATP-dependent RNA helicase that binds to partially double-stranded RNAs (dsRNAs) in order to unwind RNA secondary structures. Unwinding is promoted in the presence of single-strand binding proteins. Also mediates RNA duplex formation thereby displacing the single-strand RNA binding protein. ATP and ADP modulate its activity: ATP binding and hydrolysis by DDX42 triggers RNA strand separation, whereas the ADP-bound form of the protein triggers annealing of complementary RNA strands. Required for assembly of the 17S U2 SnRNP complex of the spliceosome, a large ribonucleoprotein complex that removes introns from transcribed pre-mRNAs: DDX42 associates transiently with the SF3B subcomplex of the 17S U2 SnRNP complex and is released after fulfilling its role in the assembly of 17S U2 SnRNP. Involved in the survival of cells by interacting with TP53BP2 and thereby counteracting the apoptosis-stimulating activity of TP53BP2. Relocalizes TP53BP2 to the cytoplasm. The chain is ATP-dependent RNA helicase DDX42 (DDX42) from Pongo abelii (Sumatran orangutan).